Reading from the N-terminus, the 256-residue chain is MNNAIFPNKFKAALAAQQVQIGCWSALASPITTEVLGLAGFDWLVLDGEHAPNDVSTLIPQLMALKGSASAPVVRVPTNEPVIIKRMLDIGFYNFLIPFVETQEEAARAVASTRYPPEGIRGVSVSHRANMFGTVPDYFAQSNKNITIIVQIESQLGVDNVDAIAATEGVDGIFVGPSDLAAALGHLGNASHPDVQQTIQHIFARAKAHGKPCGILAPVEADARRYLEWGATFVAVGSDLGAFRASTQKLADTFKK.

Catalysis depends on H50, which acts as the Proton acceptor. Residue Q151 participates in substrate binding. E153 is a Mg(2+) binding site. Substrate contacts are provided by S178 and D179. D179 contacts Mg(2+).

This sequence belongs to the HpcH/HpaI aldolase family. KDGluc aldolase subfamily. In terms of assembly, homohexamer; trimer of dimers. The cofactor is Mg(2+).

It catalyses the reaction 5-dehydro-4-deoxy-D-glucarate = 2-hydroxy-3-oxopropanoate + pyruvate. It carries out the reaction 2-dehydro-3-deoxy-D-glucarate = 2-hydroxy-3-oxopropanoate + pyruvate. Its pathway is carbohydrate acid metabolism; galactarate degradation; D-glycerate from galactarate: step 2/3. In terms of biological role, catalyzes the reversible retro-aldol cleavage of both 5-keto-4-deoxy-D-glucarate and 2-keto-3-deoxy-D-glucarate to pyruvate and tartronic semialdehyde. This is 5-keto-4-deoxy-D-glucarate aldolase from Salmonella paratyphi A (strain ATCC 9150 / SARB42).